The following is a 553-amino-acid chain: Rhodopsin kinase GRK7 (553 aa).

The residue at position 36 (Ser36) is a Phosphoserine; by PKA. Positions 56 to 176 constitute an RGS domain; sequence FHSLCEQQPI…VTSAFYDKFL (121 aa). Residues 191–454 form the Protein kinase domain; the sequence is FTEFRVLGKG…SDDPRKHHFF (264 aa). ATP-binding positions include 197–205 and Lys220; that span reads LGKGGFGEV. Residue Asp316 is the Proton acceptor of the active site. Residues 455–520 enclose the AGC-kinase C-terminal domain; that stretch reads KTINFPRLEA…GAVPIAWQEE (66 aa). Position 550 is a cysteine methyl ester (Cys550). The S-geranylgeranyl cysteine moiety is linked to residue Cys550. The propeptide at 551–553 is removed in mature form; it reads LLL.

Belongs to the protein kinase superfamily. AGC Ser/Thr protein kinase family. GPRK subfamily. In terms of assembly, interacts (when prenylated) with PDE6D; this promotes release from membranes. In terms of processing, autophosphorylated in vitro at Ser-490. Phosphorylation at Ser-36 is regulated by light and activated by cAMP. In terms of tissue distribution, retinal cones, outer and inner segments.

The protein localises to the membrane. It catalyses the reaction L-threonyl-[rhodopsin] + ATP = O-phospho-L-threonyl-[rhodopsin] + ADP + H(+). The enzyme catalyses L-seryl-[rhodopsin] + ATP = O-phospho-L-seryl-[rhodopsin] + ADP + H(+). With respect to regulation, inhibited by phosphorylation of Ser-36. Retina-specific kinase involved in the shutoff of the photoresponse and adaptation to changing light conditions via cone opsin phosphorylation, including rhodopsin (RHO). The chain is Rhodopsin kinase GRK7 (GRK7) from Homo sapiens (Human).